Reading from the N-terminus, the 530-residue chain is Type 2 DNA topoisomerase 6 subunit B (530 aa).

Residues asparagine 42, aspartate 76, 97–98, 106–113, and lysine 427 contribute to the ATP site; these read SK and GMYGLGVK.

This sequence belongs to the TOP6B family. As to quaternary structure, homodimer. Heterotetramer of two Top6A and two Top6B chains.

The enzyme catalyses ATP-dependent breakage, passage and rejoining of double-stranded DNA.. Relaxes both positive and negative superturns and exhibits a strong decatenase activity. In Saccharolobus islandicus (strain M.16.4 / Kamchatka #3) (Sulfolobus islandicus), this protein is Type 2 DNA topoisomerase 6 subunit B.